Reading from the N-terminus, the 434-residue chain is D-amino acid dehydrogenase (434 aa).

Position 3–17 (3–17 (VLVLGSGVIGTTSAW)) interacts with FAD.

The protein belongs to the DadA oxidoreductase family. It depends on FAD as a cofactor.

It carries out the reaction a D-alpha-amino acid + A + H2O = a 2-oxocarboxylate + AH2 + NH4(+). It participates in amino-acid degradation; D-alanine degradation; NH(3) and pyruvate from D-alanine: step 1/1. Its function is as follows. Oxidative deamination of D-amino acids. This chain is D-amino acid dehydrogenase, found in Stenotrophomonas maltophilia (strain K279a).